The following is a 449-amino-acid chain: Elongation factor 1-alpha (449 aa).

One can recognise a tr-type G domain in the interval 5–230; that stretch reads KVHMNLVVVG…DMLEPPVRPS (226 aa). The segment at 14-21 is G1; sequence GHVDAGKS. 14-21 contributes to the GTP binding site; that stretch reads GHVDAGKS. The segment at 70–74 is G2; it reads GITID. The G3 stretch occupies residues 91-94; sequence DAPG. Residues 91–95 and 153–156 contribute to the GTP site; these read DAPGH and NKMD. Positions 153–156 are G4; it reads NKMD. The tract at residues 194–196 is G5; the sequence is SGW. At E362 the chain carries 5-glutamyl glycerylphosphorylethanolamine.

It belongs to the TRAFAC class translation factor GTPase superfamily. Classic translation factor GTPase family. EF-Tu/EF-1A subfamily. Post-translationally, phosphatidylethanolamine (PE) is a direct precursor of the ethanolamine-phosphoglycerol (EPG) moiety.

The protein localises to the cytoplasm. Functionally, this protein promotes the GTP-dependent binding of aminoacyl-tRNA to the A-site of ribosomes during protein biosynthesis. The polypeptide is Elongation factor 1-alpha (TEF1) (Trypanosoma brucei brucei).